The primary structure comprises 255 residues: tRNA pseudouridine synthase A (255 aa).

D43 functions as the Nucleophile in the catalytic mechanism. Y94 is a substrate binding site.

This sequence belongs to the tRNA pseudouridine synthase TruA family.

The catalysed reaction is uridine(38/39/40) in tRNA = pseudouridine(38/39/40) in tRNA. Formation of pseudouridine at positions 38, 39 and 40 in the anticodon stem and loop of transfer RNAs. In Pyrobaculum neutrophilum (strain DSM 2338 / JCM 9278 / NBRC 100436 / V24Sta) (Thermoproteus neutrophilus), this protein is tRNA pseudouridine synthase A.